We begin with the raw amino-acid sequence, 436 residues long: MSTINNPLNIKTRSHSSMGGGMIMDENKVPKSSIGMDKKIGGTTGLKSHRGALSDLTNNTHQTTGMATKTVQLSNNNIIMPQPTNTRNNIITRSKSIIDNGASLRNSALISGVLPNANGPVNKVQKRDIQSMEMMNNIPQQPVMIDDVDNDTNMIQEEQMVIDITEVPENIDIYDSHDPQCVGEYVNEIFAYYREKEQIDKIDKDYIKNQYHINERMRAILVDWMMAVHVRFKLLSETFFLSVNIVDRYLAKVMIPVTKLQLVGITAILLACKYEEIYSPQIKDFVHTSDDACTHAEVIDMERQILSTLQFHMSVATPLHFLRRFSKAAGSDSRTHSLSKYLSELSMVEYRMVQFVPSMIAAASIYVARRMTMKSGPYWNVTLEYYTCYKESEILQCAQELKEVRKRADTSNLKATRKKYLSSKLMEVAAIPVVEF.

Polar residues predominate over residues 1–17; the sequence is MSTINNPLNIKTRSHSS. A disordered region spans residues 1–33; the sequence is MSTINNPLNIKTRSHSSMGGGMIMDENKVPKSS.

It belongs to the cyclin family. Cyclin AB subfamily. As to quaternary structure, interacts with the cdk1 protein kinase to form a serine/threonine kinase holoenzyme complex also known as maturation promoting factor (MPF). The cyclin subunit imparts substrate specificity to the complex.

Essential for the control of the cell cycle at the G2/M (mitosis) transition. The protein is G2/mitotic-specific cyclin-B (cycB) of Dictyostelium discoideum (Social amoeba).